A 460-amino-acid chain; its full sequence is Probable asparagine--tRNA ligase, mitochondrial (460 aa).

It belongs to the class-II aminoacyl-tRNA synthetase family.

It is found in the mitochondrion matrix. It catalyses the reaction tRNA(Asn) + L-asparagine + ATP = L-asparaginyl-tRNA(Asn) + AMP + diphosphate + H(+). This chain is Probable asparagine--tRNA ligase, mitochondrial (asnS2), found in Dictyostelium discoideum (Social amoeba).